Consider the following 78-residue polypeptide: Large ribosomal subunit protein bL28 (78 aa).

Belongs to the bacterial ribosomal protein bL28 family.

The sequence is that of Large ribosomal subunit protein bL28 from Edwardsiella ictaluri (strain 93-146).